The chain runs to 1302 residues: Zinc finger protein 536 (1302 aa).

The segment at 1–26 (MEEASLCLGVSSTAPEAEPHLSGPVL) is disordered. 7 C2H2-type zinc fingers span residues 130-152 (YPCP…MRTH), 158-180 (FKCP…LRTH), 274-297 (FRCT…RILH), 300-323 (YKCT…EKAH), 345-367 (FRCE…MRKH), 373-395 (HCCQ…MKVH), and 631-653 (TECP…SRVH). Residues 650-736 (SRVHKRDRKS…IGEEAGRAGG (87 aa)) form a disordered region. Residues 657 to 676 (RKSDEDALHVGVGLEERRGS) show a composition bias toward basic and acidic residues. The segment covering 677 to 698 (GSDQESQSVSRSTTPGSSNVTE) has biased composition (polar residues). C2H2-type zinc fingers lie at residues 753–775 (KDCP…LRIH) and 781–803 (YKCP…LERH). Disordered regions lie at residues 804-832 (HRER…SKAP), 855-897 (GPAS…SKSS), 935-988 (KDTK…APTL), and 1133-1261 (NKNT…GLEK). Ser828 and Ser829 each carry phosphoserine. Positions 869 to 883 (GDHSGQATGMPSELS) are enriched in polar residues. Residues 935-973 (KDTKDKVPSDAHPMKAHTAEGGEEKASMKPSQRKSEKSQ) show a composition bias toward basic and acidic residues. Composition is skewed to acidic residues over residues 1161–1171 (DLSDIASSEDM) and 1179–1188 (NEDEELDTEP). A compositionally biased stretch (low complexity) spans 1198 to 1212 (LSKDGSSEGGDSLLS).

Belongs to the krueppel C2H2-type zinc-finger protein family. In terms of tissue distribution, expressed predominantly in the brain, while a weak signal is also detected in the heart and testis. Expression is abundant in neuronal cells of the cerebral cortex, hippocampus and hypothalamic area (at protein level).

Its subcellular location is the nucleus. Functionally, transcriptional repressor that negatively regulates neuron differentiation by repressing retinoic acid-induced gene transcription. Binds and interrupts RARA from binding to retinoic acid response elements (RARE) composed of tandem 5'-AGGTCA-3' sites known as DR1-DR5. Recognizes and binds 2 copies of the core DNA sequence 5'-CCCCCA-3'. In Mus musculus (Mouse), this protein is Zinc finger protein 536 (Znf536).